A 133-amino-acid chain; its full sequence is ATP synthase epsilon chain, chloroplastic (133 aa).

Belongs to the ATPase epsilon chain family. In terms of assembly, F-type ATPases have 2 components, CF(1) - the catalytic core - and CF(0) - the membrane proton channel. CF(1) has five subunits: alpha(3), beta(3), gamma(1), delta(1), epsilon(1). CF(0) has three main subunits: a, b and c.

It is found in the plastid. Its subcellular location is the chloroplast thylakoid membrane. Its function is as follows. Produces ATP from ADP in the presence of a proton gradient across the membrane. The protein is ATP synthase epsilon chain, chloroplastic of Phaeodactylum tricornutum (strain CCAP 1055/1).